Here is an 85-residue protein sequence, read N- to C-terminus: Small ribosomal subunit protein uS17 (85 aa).

It belongs to the universal ribosomal protein uS17 family. As to quaternary structure, part of the 30S ribosomal subunit.

One of the primary rRNA binding proteins, it binds specifically to the 5'-end of 16S ribosomal RNA. This Actinobacillus succinogenes (strain ATCC 55618 / DSM 22257 / CCUG 43843 / 130Z) protein is Small ribosomal subunit protein uS17.